The following is a 155-amino-acid chain: Ribosomal RNA large subunit methyltransferase H (155 aa).

S-adenosyl-L-methionine contacts are provided by residues leucine 72, glycine 103, and 122–127; that span reads LSPLTL.

This sequence belongs to the RNA methyltransferase RlmH family. In terms of assembly, homodimer.

The protein resides in the cytoplasm. It carries out the reaction pseudouridine(1915) in 23S rRNA + S-adenosyl-L-methionine = N(3)-methylpseudouridine(1915) in 23S rRNA + S-adenosyl-L-homocysteine + H(+). Specifically methylates the pseudouridine at position 1915 (m3Psi1915) in 23S rRNA. This Aeromonas hydrophila subsp. hydrophila (strain ATCC 7966 / DSM 30187 / BCRC 13018 / CCUG 14551 / JCM 1027 / KCTC 2358 / NCIMB 9240 / NCTC 8049) protein is Ribosomal RNA large subunit methyltransferase H.